The chain runs to 227 residues: Mitochondrial inner membrane protease ATP23 (227 aa).

His-129 contributes to the a divalent metal cation binding site. Glu-130 is a catalytic residue. His-133 contacts a divalent metal cation.

It belongs to the peptidase M76 family.

It localises to the mitochondrion inner membrane. Its function is as follows. Has a dual role in the assembly of mitochondrial ATPase. Acts as a protease that removes N-terminal residues of mitochondrial ATPase CF(0) subunit 6 at the intermembrane space side. Also involved in the correct assembly of the membrane-embedded ATPase CF(0) particle, probably mediating association of subunit 6 with the subunit 9 ring. The chain is Mitochondrial inner membrane protease ATP23 (ATP23) from Cryptococcus neoformans var. neoformans serotype D (strain JEC21 / ATCC MYA-565) (Filobasidiella neoformans).